Consider the following 472-residue polypeptide: Karilysin (472 aa).

A signal peptide spans 1–20 (MKRFILLFFLSTIAIFKVYS). A propeptide spans 21-34 (QRLYDNGPLTGDNN) (activation peptide). H102, D104, H117, H133, and H155 together coordinate Zn(2+). E156 functions as the Proton donor/acceptor in the catalytic mechanism. Positions 159 and 165 each coordinate Zn(2+). Positions 196 to 386 (YGYPFSISGP…AVSCSRTISP (191 aa)) are cleaved as a propeptide — removed in short form. A propeptide spans 387–472 (FTLSPNPATD…QTYTQKLIKK (86 aa)) (removed in long form).

The protein belongs to the peptidase M10A family. Zn(2+) serves as cofactor. In terms of processing, processes itself into the mature 18-kDa enzyme (Kly18) through sequential autoproteolytic cleavage at both the N- and C-termini. However, the maturation intermediate Kly38 is found to be more active than Kly18 and the rate for its processing is slow, which raises the question as to whether Kly38 is a physiologically relevant entity.

The protein resides in the secreted. With respect to regulation, autoprocessing and proteolytic activity are completely inhibited by EDTA and 1,10-phenanthroline in vitro. Proteolytic activity is 3-fold enhanced by Ca(2+) due to stabilization of the protein structure but inhibited by an excess of Zn(2+). Inhibitory studies of karilysin identified several phage display-selected peptides with apparent inhibition constants (Ki) in the micromolar range, among which is the tetrapeptide SWFP (Ki=10.7 uM). Functionally, metalloprotease able to cleave casein, gelatin, elastin, fibrinogen and fibronectin. Shows exclusive preference for hydrophobic residues, especially Leu, Tyr and Met, at the P1' position of substrates, and for Pro or Ala at P3. Can efficiently cleave the antimicrobial peptide LL-37 which is a component of the immune system, leading to a significant reduction of its bactericidal activity. Is also able to inhibit all pathways of the human complement system. The classical and lectin complement pathways are inhibited because of the efficient degradation of mannose-binding lectin, ficolin-2, ficolin-3, and C4 by karilysin, whereas inhibition of the terminal pathway is caused by cleavage of C5. Thus, karilysin appears to be a major virulence factor of T.forsythia that contributes to evasion of the human immune response and periodontal disease. Seems to act synergistically with gingipains from the periodontal pathogen P.gingivalis present at the same sites of infection. This chain is Karilysin (kly), found in Tannerella forsythia (strain ATCC 43037 / JCM 10827 / CCUG 21028 A / KCTC 5666 / FDC 338) (Bacteroides forsythus).